The following is an 82-amino-acid chain: Defensin-like protein 22 (82 aa).

A signal peptide spans 1–24 (MAGLKVFSFALLLILTFSLIDVEG). 4 disulfides stabilise this stretch: C34–C82, C44–C69, C53–C78, and C57–C80.

This sequence belongs to the DEFL family.

Its subcellular location is the secreted. This chain is Defensin-like protein 22, found in Arabidopsis thaliana (Mouse-ear cress).